The sequence spans 63 residues: Large ribosomal subunit protein uL29 (63 aa).

Belongs to the universal ribosomal protein uL29 family.

The protein is Large ribosomal subunit protein uL29 of Pectobacterium carotovorum subsp. carotovorum (strain PC1).